Reading from the N-terminus, the 270-residue chain is tRNA pseudouridine synthase A (270 aa).

Asp-60 acts as the Nucleophile in catalysis. Substrate is bound at residue Tyr-118.

Belongs to the tRNA pseudouridine synthase TruA family. Homodimer.

It carries out the reaction uridine(38/39/40) in tRNA = pseudouridine(38/39/40) in tRNA. Functionally, formation of pseudouridine at positions 38, 39 and 40 in the anticodon stem and loop of transfer RNAs. This is tRNA pseudouridine synthase A from Salmonella arizonae (strain ATCC BAA-731 / CDC346-86 / RSK2980).